The chain runs to 514 residues: Retron Vc95 probable ATPase (514 aa).

An ATP-binding motif is present at residues 92 to 99 (GNNGSGKS).

Functionally, probable ATPase component of antiviral defense system retron Vc95, composed of a non-coding RNA (ncRNA), a reverse transcriptase (RT), this protein and a putative HNH endonuclease. Expression of retron Vc95 confers protection against bacteriophages T2, T4 and T6. At multiplicity of infection (MOI) of 0.02 cultures slow growth when infected with T4 but do not collapse, at MOI 2 cultures enter growth stasis. This is Retron Vc95 probable ATPase from Vibrio cholerae serotype O1 biovar El Tor.